Reading from the N-terminus, the 499-residue chain is Probable cytosol aminopeptidase (499 aa).

Lysine 263 and aspartate 268 together coordinate Mn(2+). Lysine 275 is an active-site residue. Mn(2+) is bound by residues aspartate 286, aspartate 345, and glutamate 347. Residue arginine 349 is part of the active site.

This sequence belongs to the peptidase M17 family. Requires Mn(2+) as cofactor.

The protein resides in the cytoplasm. It catalyses the reaction Release of an N-terminal amino acid, Xaa-|-Yaa-, in which Xaa is preferably Leu, but may be other amino acids including Pro although not Arg or Lys, and Yaa may be Pro. Amino acid amides and methyl esters are also readily hydrolyzed, but rates on arylamides are exceedingly low.. The catalysed reaction is Release of an N-terminal amino acid, preferentially leucine, but not glutamic or aspartic acids.. Functionally, presumably involved in the processing and regular turnover of intracellular proteins. Catalyzes the removal of unsubstituted N-terminal amino acids from various peptides. This chain is Probable cytosol aminopeptidase (pepA), found in Chlamydia muridarum (strain MoPn / Nigg).